Here is a 406-residue protein sequence, read N- to C-terminus: NADH-quinone oxidoreductase subunit D (406 aa).

It belongs to the complex I 49 kDa subunit family. In terms of assembly, NDH-1 is composed of 14 different subunits. Subunits NuoB, C, D, E, F, and G constitute the peripheral sector of the complex.

The protein resides in the cell inner membrane. It carries out the reaction a quinone + NADH + 5 H(+)(in) = a quinol + NAD(+) + 4 H(+)(out). In terms of biological role, NDH-1 shuttles electrons from NADH, via FMN and iron-sulfur (Fe-S) centers, to quinones in the respiratory chain. The immediate electron acceptor for the enzyme in this species is believed to be ubiquinone. Couples the redox reaction to proton translocation (for every two electrons transferred, four hydrogen ions are translocated across the cytoplasmic membrane), and thus conserves the redox energy in a proton gradient. The polypeptide is NADH-quinone oxidoreductase subunit D (Rhizorhabdus wittichii (strain DSM 6014 / CCUG 31198 / JCM 15750 / NBRC 105917 / EY 4224 / RW1) (Sphingomonas wittichii)).